A 243-amino-acid chain; its full sequence is ATP-dependent dethiobiotin synthetase BioD (243 aa).

12–17 lines the ATP pocket; sequence DVGKTF. Thr16 lines the Mg(2+) pocket. Lys37 is an active-site residue. Ser41 is a substrate binding site. ATP is bound by residues Asp54, 115 to 118, and 179 to 180; these read EGCG and NM. Mg(2+) is bound by residues Asp54 and Glu115.

The protein belongs to the dethiobiotin synthetase family. Homodimer. Mg(2+) serves as cofactor.

The protein localises to the cytoplasm. The enzyme catalyses (7R,8S)-7,8-diammoniononanoate + CO2 + ATP = (4R,5S)-dethiobiotin + ADP + phosphate + 3 H(+). Its pathway is cofactor biosynthesis; biotin biosynthesis; biotin from 7,8-diaminononanoate: step 1/2. Functionally, catalyzes a mechanistically unusual reaction, the ATP-dependent insertion of CO2 between the N7 and N8 nitrogen atoms of 7,8-diaminopelargonic acid (DAPA, also called 7,8-diammoniononanoate) to form a ureido ring. The protein is ATP-dependent dethiobiotin synthetase BioD of Caldicellulosiruptor bescii (strain ATCC BAA-1888 / DSM 6725 / KCTC 15123 / Z-1320) (Anaerocellum thermophilum).